The chain runs to 201 residues: LexA repressor (201 aa).

The H-T-H motif DNA-binding region spans 28–48 (MRDIAAHLRISGTLGVSKHLT). Active-site for autocatalytic cleavage activity residues include Ser120 and Lys157.

This sequence belongs to the peptidase S24 family. In terms of assembly, homodimer.

The enzyme catalyses Hydrolysis of Ala-|-Gly bond in repressor LexA.. In terms of biological role, represses a number of genes involved in the response to DNA damage (SOS response), including recA and lexA. In the presence of single-stranded DNA, RecA interacts with LexA causing an autocatalytic cleavage which disrupts the DNA-binding part of LexA, leading to derepression of the SOS regulon and eventually DNA repair. This Geobacter metallireducens (strain ATCC 53774 / DSM 7210 / GS-15) protein is LexA repressor.